Consider the following 301-residue polypeptide: Glycine--tRNA ligase alpha subunit (301 aa).

The protein belongs to the class-II aminoacyl-tRNA synthetase family. In terms of assembly, tetramer of two alpha and two beta subunits.

The protein localises to the cytoplasm. The enzyme catalyses tRNA(Gly) + glycine + ATP = glycyl-tRNA(Gly) + AMP + diphosphate. The sequence is that of Glycine--tRNA ligase alpha subunit from Glaesserella parasuis serovar 5 (strain SH0165) (Haemophilus parasuis).